A 189-amino-acid chain; its full sequence is UPF0301 protein bbp_491 (189 aa).

The protein belongs to the UPF0301 (AlgH) family.

This Buchnera aphidicola subsp. Baizongia pistaciae (strain Bp) protein is UPF0301 protein bbp_491.